A 147-amino-acid chain; its full sequence is Large ribosomal subunit protein uL22c (147 aa).

It belongs to the universal ribosomal protein uL22 family. Part of the 50S ribosomal subunit.

The protein localises to the plastid. Functionally, this protein binds specifically to 23S rRNA. Its function is as follows. The globular domain of the protein is located near the polypeptide exit tunnel on the outside of the subunit, while an extended beta-hairpin is found that lines the wall of the exit tunnel in the center of the 70S ribosome. In Cuscuta obtusiflora (Peruvian dodder), this protein is Large ribosomal subunit protein uL22c (rpl22).